Reading from the N-terminus, the 147-residue chain is uncharacterized protein (147 aa).

Disordered stretches follow at residues 1–49 (MRTP…NLNE) and 125–147 (SPSPTTSFNSTNPQNTHQTRKSN). Composition is skewed to low complexity over residues 8 to 49 (NNNY…NLNE) and 125 to 140 (SPSPTTSFNSTNPQNT).

This is an uncharacterized protein from Dictyostelium discoideum (Social amoeba).